A 205-amino-acid chain; its full sequence is Molybdenum cofactor guanylyltransferase (205 aa).

GTP contacts are provided by residues 14 to 16 (LAG), K27, D77, and D107. D107 provides a ligand contact to Mg(2+).

Belongs to the MobA family. In terms of assembly, monomer. Mg(2+) is required as a cofactor.

It localises to the cytoplasm. The enzyme catalyses Mo-molybdopterin + GTP + H(+) = Mo-molybdopterin guanine dinucleotide + diphosphate. In terms of biological role, transfers a GMP moiety from GTP to Mo-molybdopterin (Mo-MPT) cofactor (Moco or molybdenum cofactor) to form Mo-molybdopterin guanine dinucleotide (Mo-MGD) cofactor. This is Molybdenum cofactor guanylyltransferase from Burkholderia ambifaria (strain ATCC BAA-244 / DSM 16087 / CCUG 44356 / LMG 19182 / AMMD) (Burkholderia cepacia (strain AMMD)).